Reading from the N-terminus, the 78-residue chain is Sec-independent protein translocase protein TatA (78 aa).

Residues methionine 1–glycine 21 traverse the membrane as a helical segment. Basic and acidic residues predominate over residues glutamate 47 to serine 59. Positions glutamate 47–alanine 78 are disordered. The span at leucine 60–threonine 69 shows a compositional bias: polar residues.

The protein belongs to the TatA/E family. As to quaternary structure, the Tat system comprises two distinct complexes: a TatABC complex, containing multiple copies of TatA, TatB and TatC subunits, and a separate TatA complex, containing only TatA subunits. Substrates initially bind to the TatABC complex, which probably triggers association of the separate TatA complex to form the active translocon.

The protein localises to the cell inner membrane. In terms of biological role, part of the twin-arginine translocation (Tat) system that transports large folded proteins containing a characteristic twin-arginine motif in their signal peptide across membranes. TatA could form the protein-conducting channel of the Tat system. This is Sec-independent protein translocase protein TatA from Vibrio vulnificus (strain YJ016).